The following is a 186-amino-acid chain: Adenylate kinase (186 aa).

12–17 serves as a coordination point for ATP; it reads GAGKGT. The interval 32-61 is NMP; it reads STGDLLRAEVNAQSPLGKEAALIMNKGELV. Residues Thr-33, Arg-38, 59 to 61, 86 to 89, and Gln-93 contribute to the AMP site; these read ELV and GFPR. The LID stretch occupies residues 127 to 133; that stretch reads SRGRSDD. Arg-128 is a binding site for ATP. AMP contacts are provided by Arg-130 and Arg-141. Gly-169 contributes to the ATP binding site.

It belongs to the adenylate kinase family. In terms of assembly, monomer.

The protein localises to the cytoplasm. The catalysed reaction is AMP + ATP = 2 ADP. Its pathway is purine metabolism; AMP biosynthesis via salvage pathway; AMP from ADP: step 1/1. In terms of biological role, catalyzes the reversible transfer of the terminal phosphate group between ATP and AMP. Plays an important role in cellular energy homeostasis and in adenine nucleotide metabolism. This Prochlorococcus marinus (strain MIT 9211) protein is Adenylate kinase.